We begin with the raw amino-acid sequence, 293 residues long: Rhomboid-like protease 1 (293 aa).

The segment at 18–40 is disordered; that stretch reads EHTPLYNAETGSRDSDSTSSGGA. A run of 6 helical transmembrane segments spans residues 62 to 82, 112 to 132, 148 to 168, 174 to 194, 217 to 237, and 262 to 282; these read VVLAISIVDWIFYIVTVCLDT, LLLPVFLHANFFHVFFNVFFQ, FTGLYFASAIYGNLLSATAFF, VGASTAGFGLIGIQICEMALT, LLMFTLNGGSIDQMGHLGGLL, and AAAIGILLALPAACFPILYAV. Catalysis depends on Ser177, which acts as the Nucleophile. The active site involves His232.

It belongs to the peptidase S54 family.

Its subcellular location is the cytoplasmic vesicle. The protein resides in the secretory vesicle. The protein localises to the microneme membrane. It carries out the reaction Cleaves type-1 transmembrane domains using a catalytic dyad composed of serine and histidine that are contributed by different transmembrane domains.. Its function is as follows. Serine protease involved in intramembrane proteolysis and the subsequent release of polypeptides from their membrane anchors. Has no detectable activity towards MIC2. This chain is Rhomboid-like protease 1 (ROM1), found in Toxoplasma gondii.